Consider the following 193-residue polypeptide: Oligoribonuclease (193 aa).

The region spanning 14 to 177 is the Exonuclease domain; that stretch reads LIWIDLEMTG…SDIYDSIAEL (164 aa). Tyr135 is a catalytic residue.

This sequence belongs to the oligoribonuclease family.

It is found in the cytoplasm. Its function is as follows. 3'-to-5' exoribonuclease specific for small oligoribonucleotides. This Xylella fastidiosa (strain Temecula1 / ATCC 700964) protein is Oligoribonuclease.